We begin with the raw amino-acid sequence, 339 residues long: Annexin A2 (339 aa).

Ser2 bears the N-acetylserine mark. Positions 2 to 24 (STVHEILCKLSLEGDHSTPPSAY) are S100A10-binding site. At Tyr24 the chain carries Phosphotyrosine; by SRC. Ser26 is modified (phosphoserine; by PKC). 2 Annexin repeats span residues 33-104 (FDAE…GLLK) and 105-176 (TPAQ…ALAK). Position 49 is an N6-acetyllysine; alternate (Lys49). Residue Lys49 forms a Glycyl lysine isopeptide (Lys-Gly) (interchain with G-Cter in SUMO1); alternate linkage. Lys49 participates in a covalent cross-link: Glycyl lysine isopeptide (Lys-Gly) (interchain with G-Cter in SUMO2); alternate. Residue Lys152 is modified to N6-acetyllysine. Position 184 is a phosphoserine (Ser184). Annexin repeat units lie at residues 189 to 261 (ELID…NLVQ) and 265 to 336 (NKPL…YLCG). Residue Tyr199 is modified to Phosphotyrosine. N6-acetyllysine is present on Lys227.

It belongs to the annexin family. As to quaternary structure, heterotetramer containing 2 light chains of S100A10/p11 and 2 heavy chains of ANXA2/p36. Interacts with ATP1B1. Interacts with DYSF. Interacts with COCH. Interacts (via repeat Annexin 1) with PCSK9 (via the C-terminal domain); the interaction inhibits the degradation of LDLR. Interacts with CEACAM1 (via the cytoplasmic domain); this interaction is regulated by phosphorylation of CEACAM1. Interacts with APPL2 and APPL1; targets APPL2 to endosomes and acting in parallel to RAB5A. Interacts with S100A4. May interact with UBAP2. Interacts with PLEKHG4B; this interaction is required for PLEKHG4B localization to cell-cell adhesions. Interacts with FAM13A. Interacts with salivary cystatin-L2 (via loop 2) from the tick Ixodes scapularis; the interaction results in reduced activation of mouse NLRC4 inflammasome formation upon Anaplasma phagocytophilum infection. Post-translationally, ISGylated.

Its subcellular location is the secreted. It localises to the extracellular space. The protein localises to the extracellular matrix. It is found in the basement membrane. The protein resides in the melanosome. Its subcellular location is the early endosome. Functionally, calcium-regulated membrane-binding protein whose affinity for calcium is greatly enhanced by anionic phospholipids. It binds two calcium ions with high affinity. May be involved in heat-stress response. Inhibits PCSK9-enhanced LDLR degradation, probably reduces PCSK9 protein levels via a translational mechanism but also competes with LDLR for binding with PCSK9. Binds to endosomes damaged by phagocytosis of particulate wear debris and participates in endosomal membrane stabilization, thereby limiting NLRP3 inflammasome activation. Required for endothelial cell surface plasmin generation and may support fibrinolytic surveillance and neoangiogenesis. Its function is as follows. (Microbial infection) Regulates the formation of the NLRC4 inflammasome triggered by Anaplasma phagocytophilum infection. In terms of biological role, (Microbial infection) Protects against Klebsiella pneumoniae infection. Attenuates bacteria-induced pulmonary inflammation and promotes intro-abdominal pathogen clearance. Promotes anti-inflammatory responses by facilitating TLR4 internalization and translocation into early endosomal membranes; this leads to activation of TRAM-dependent endosomal signaling and release of anti-inflammatory cytokines. (Microbial infection) Promotes macrophage phagocytic efficiency towards Cryptococcus neoformans and ability to control fungal infection inside the cells. Functionally, (Microbial infection) Contributes to protection against Pseudomonas aeruginosa infection by regulating autophagy via the AKT1-mTOR-ULK1/2 signaling pathway and activation of Rho GTPases via FAM13A-mediated mechanism. This is Annexin A2 (Anxa2) from Mus musculus (Mouse).